A 128-amino-acid polypeptide reads, in one-letter code: Small ribosomal subunit protein uS12 (128 aa).

The disordered stretch occupies residues 1-24; it reads MPTFNQLVKYGREKRKKKSKAPAL. At Asp-89 the chain carries 3-methylthioaspartic acid. Residues 105 to 128 are disordered; sequence AGVEGRRQSRSKYGTKRPKEEKGG.

This sequence belongs to the universal ribosomal protein uS12 family. In terms of assembly, part of the 30S ribosomal subunit. Contacts proteins S8 and S17. May interact with IF1 in the 30S initiation complex.

Its function is as follows. With S4 and S5 plays an important role in translational accuracy. Functionally, interacts with and stabilizes bases of the 16S rRNA that are involved in tRNA selection in the A site and with the mRNA backbone. Located at the interface of the 30S and 50S subunits, it traverses the body of the 30S subunit contacting proteins on the other side and probably holding the rRNA structure together. The combined cluster of proteins S8, S12 and S17 appears to hold together the shoulder and platform of the 30S subunit. The protein is Small ribosomal subunit protein uS12 of Aquifex aeolicus (strain VF5).